We begin with the raw amino-acid sequence, 61 residues long: MAKDYVTGKKTTFGNKRSHSLNPTRRAWKPNLQKVRILVDGKPKRVWVSTKALKSGKVTRV.

The interval 1 to 24 is disordered; sequence MAKDYVTGKKTTFGNKRSHSLNPT. Over residues 9 to 23 the composition is skewed to polar residues; that stretch reads KKTTFGNKRSHSLNP.

This sequence belongs to the bacterial ribosomal protein bL28 family.

The sequence is that of Large ribosomal subunit protein bL28 from Lactobacillus acidophilus (strain ATCC 700396 / NCK56 / N2 / NCFM).